The primary structure comprises 148 residues: Arginine repressor (148 aa).

Belongs to the ArgR family.

The protein localises to the cytoplasm. It participates in amino-acid biosynthesis; L-arginine biosynthesis [regulation]. In terms of biological role, regulates arginine biosynthesis genes. The sequence is that of Arginine repressor from Chlorobium luteolum (strain DSM 273 / BCRC 81028 / 2530) (Pelodictyon luteolum).